We begin with the raw amino-acid sequence, 198 residues long: Glycerol-3-phosphate acyltransferase (198 aa).

5 consecutive transmembrane segments (helical) span residues 5–25 (LILL…LWIG), 56–76 (SIVT…PFFF), 84–104 (FWLL…FAGF), 114–134 (AGVI…VFLV), and 158–178 (LFMG…FVIW).

It belongs to the PlsY family. In terms of assembly, probably interacts with PlsX.

It is found in the cell membrane. It carries out the reaction an acyl phosphate + sn-glycerol 3-phosphate = a 1-acyl-sn-glycero-3-phosphate + phosphate. It functions in the pathway lipid metabolism; phospholipid metabolism. In terms of biological role, catalyzes the transfer of an acyl group from acyl-phosphate (acyl-PO(4)) to glycerol-3-phosphate (G3P) to form lysophosphatidic acid (LPA). This enzyme utilizes acyl-phosphate as fatty acyl donor, but not acyl-CoA or acyl-ACP. This Listeria monocytogenes serotype 4b (strain CLIP80459) protein is Glycerol-3-phosphate acyltransferase.